Consider the following 709-residue polypeptide: Meiotic sister-chromatid recombination protein 6, mitochondrial (709 aa).

The N-terminal 29 residues, 1 to 29 (MLRINQRLLVRSLRDAQYQYLKSTALRFL), are a transit peptide targeting the mitochondrion.

It localises to the mitochondrion. Functionally, may be involved in the control of meiotic sister-chromatid recombination. The sequence is that of Meiotic sister-chromatid recombination protein 6, mitochondrial (MSC6) from Candida glabrata (strain ATCC 2001 / BCRC 20586 / JCM 3761 / NBRC 0622 / NRRL Y-65 / CBS 138) (Yeast).